The chain runs to 657 residues: Glycogen debranching enzyme (657 aa).

Catalysis depends on Asp-336, which acts as the Nucleophile. Residue Glu-371 is the Proton donor of the active site. The span at 458–467 shows a compositional bias: basic and acidic residues; that stretch reads NEANGEENRD. A disordered region spans residues 458 to 479; sequence NEANGEENRDGTNNNYSNNHGK.

Belongs to the glycosyl hydrolase 13 family.

It carries out the reaction Hydrolysis of (1-&gt;6)-alpha-D-glucosidic linkages to branches with degrees of polymerization of three or four glucose residues in limit dextrin.. It participates in glycan degradation; glycogen degradation. Its function is as follows. Removes maltotriose and maltotetraose chains that are attached by 1,6-alpha-linkage to the limit dextrin main chain, generating a debranched limit dextrin. This Shigella boydii serotype 18 (strain CDC 3083-94 / BS512) protein is Glycogen debranching enzyme.